Reading from the N-terminus, the 72-residue chain is Large ribosomal subunit protein bL28 (72 aa).

This sequence belongs to the bacterial ribosomal protein bL28 family.

In Chlorobium phaeovibrioides (strain DSM 265 / 1930) (Prosthecochloris vibrioformis (strain DSM 265)), this protein is Large ribosomal subunit protein bL28.